A 418-amino-acid chain; its full sequence is Serine--tRNA ligase (418 aa).

227–229 (TSE) is a binding site for L-serine. ATP is bound by residues 258–260 (RRE) and valine 274. L-serine is bound at residue glutamate 281. ATP is bound at residue 345–348 (ELTS). Position 380 (threonine 380) interacts with L-serine.

Belongs to the class-II aminoacyl-tRNA synthetase family. Type-1 seryl-tRNA synthetase subfamily. As to quaternary structure, homodimer. The tRNA molecule binds across the dimer.

The protein resides in the cytoplasm. The catalysed reaction is tRNA(Ser) + L-serine + ATP = L-seryl-tRNA(Ser) + AMP + diphosphate + H(+). It carries out the reaction tRNA(Sec) + L-serine + ATP = L-seryl-tRNA(Sec) + AMP + diphosphate + H(+). It participates in aminoacyl-tRNA biosynthesis; selenocysteinyl-tRNA(Sec) biosynthesis; L-seryl-tRNA(Sec) from L-serine and tRNA(Sec): step 1/1. Functionally, catalyzes the attachment of serine to tRNA(Ser). Is also able to aminoacylate tRNA(Sec) with serine, to form the misacylated tRNA L-seryl-tRNA(Sec), which will be further converted into selenocysteinyl-tRNA(Sec). The sequence is that of Serine--tRNA ligase from Rhodococcus jostii (strain RHA1).